The following is a 598-amino-acid chain: Elongation factor 4 (598 aa).

In terms of domain architecture, tr-type G spans 3-185 (QHIRNFSIIA…MIVARIPPPE (183 aa)). GTP-binding positions include 15 to 20 (DHGKST) and 132 to 135 (NKID).

It belongs to the TRAFAC class translation factor GTPase superfamily. Classic translation factor GTPase family. LepA subfamily.

It localises to the cell inner membrane. It catalyses the reaction GTP + H2O = GDP + phosphate + H(+). Required for accurate and efficient protein synthesis under certain stress conditions. May act as a fidelity factor of the translation reaction, by catalyzing a one-codon backward translocation of tRNAs on improperly translocated ribosomes. Back-translocation proceeds from a post-translocation (POST) complex to a pre-translocation (PRE) complex, thus giving elongation factor G a second chance to translocate the tRNAs correctly. Binds to ribosomes in a GTP-dependent manner. This chain is Elongation factor 4, found in Nitrosomonas eutropha (strain DSM 101675 / C91 / Nm57).